We begin with the raw amino-acid sequence, 189 residues long: MIDEIKAQLDSHQKVMESVKGELAPKIAAVADLLVDALGNGKKLLVMGNGGSAADAQHFAAEIVGRFKMERRGLPAIALTTDTSILTAIGNDYGFEQIFRRQIEALACEGDVVVGISTSGTSKNVHGALLLADQVGCRTIGLLGKDGGTIREIVDVDLTVSCDDTPRVQEGHITIIHIICDLLEKRLFG.

Positions 34 to 189 constitute an SIS domain; that stretch reads LVDALGNGKK…CDLLEKRLFG (156 aa). 49 to 51 serves as a coordination point for substrate; the sequence is NGG. Residues His58 and Glu62 each contribute to the Zn(2+) site. Substrate-binding positions include Glu62, 91 to 92, 117 to 119, Ser122, and Gln169; these read ND and STS. Zn(2+) contacts are provided by Gln169 and His177.

The protein belongs to the SIS family. GmhA subfamily. As to quaternary structure, homotetramer. The cofactor is Zn(2+).

Its subcellular location is the cytoplasm. It carries out the reaction 2 D-sedoheptulose 7-phosphate = D-glycero-alpha-D-manno-heptose 7-phosphate + D-glycero-beta-D-manno-heptose 7-phosphate. It participates in carbohydrate biosynthesis; D-glycero-D-manno-heptose 7-phosphate biosynthesis; D-glycero-alpha-D-manno-heptose 7-phosphate and D-glycero-beta-D-manno-heptose 7-phosphate from sedoheptulose 7-phosphate: step 1/1. Its function is as follows. Catalyzes the isomerization of sedoheptulose 7-phosphate in D-glycero-D-manno-heptose 7-phosphate. The protein is Phosphoheptose isomerase of Geotalea uraniireducens (strain Rf4) (Geobacter uraniireducens).